We begin with the raw amino-acid sequence, 379 residues long: Nitric oxide reductase FlRd-NAD(+) reductase (379 aa).

This sequence belongs to the FAD-dependent oxidoreductase family. FAD is required as a cofactor.

Its subcellular location is the cytoplasm. It catalyses the reaction 2 reduced [nitric oxide reductase rubredoxin domain] + NAD(+) + H(+) = 2 oxidized [nitric oxide reductase rubredoxin domain] + NADH. It functions in the pathway nitrogen metabolism; nitric oxide reduction. Its function is as follows. One of at least two accessory proteins for anaerobic nitric oxide (NO) reductase. Reduces the rubredoxin moiety of NO reductase. This is Nitric oxide reductase FlRd-NAD(+) reductase from Pectobacterium atrosepticum (strain SCRI 1043 / ATCC BAA-672) (Erwinia carotovora subsp. atroseptica).